We begin with the raw amino-acid sequence, 316 residues long: Small ribosomal subunit protein RACK1 (316 aa).

7 WD repeats span residues 13–44 (GHNG…IIWN), 61–91 (GHSH…RLWE), 103–133 (GHTN…KLWN), 146–178 (GHTE…KVWE), 190–220 (GHTG…MLWD), 231–260 (NAND…IIFD), and 281–311 (SREP…RAWG).

Belongs to the WD repeat G protein beta family. Ribosomal protein RACK1 subfamily. As to quaternary structure, component of the small ribosomal subunit (SSU). Mature N.crassa ribosomes consist of a small (40S) and a large (60S) subunit. The 40S small subunit contains 1 molecule of ribosomal RNA (18S rRNA) and at least 32 different proteins. The large 60S subunit contains 3 rRNA molecules (26S, 5.8S and 5S rRNA) and at least 42 different proteins.

It is found in the cytoplasm. In terms of biological role, component of the ribosome, a large ribonucleoprotein complex responsible for the synthesis of proteins in the cell. The small ribosomal subunit (SSU) binds messenger RNAs (mRNAs) and translates the encoded message by selecting cognate aminoacyl-transfer RNA (tRNA) molecules. The large subunit (LSU) contains the ribosomal catalytic site termed the peptidyl transferase center (PTC), which catalyzes the formation of peptide bonds, thereby polymerizing the amino acids delivered by tRNAs into a polypeptide chain. The nascent polypeptides leave the ribosome through a tunnel in the LSU and interact with protein factors that function in enzymatic processing, targeting, and the membrane insertion of nascent chains at the exit of the ribosomal tunnel. Required to activate general amino acid control under conditions of amino acid limitation in the vegetative growth phase, and for formation of protoperithecia in preparation for the sexual phase of the life cycle of N.crassa. The chain is Small ribosomal subunit protein RACK1 (cpc-2) from Neurospora crassa (strain ATCC 24698 / 74-OR23-1A / CBS 708.71 / DSM 1257 / FGSC 987).